A 613-amino-acid polypeptide reads, in one-letter code: UvrABC system protein C (613 aa).

Residues 20 to 98 (ERPGVYLMYD…IKRHKPRYNI (79 aa)) form the GIY-YIG domain. One can recognise a UVR domain in the interval 209–244 (FDVIESLGHKMQQASDEFEFEKAALYRDKISALRAI).

Belongs to the UvrC family. As to quaternary structure, interacts with UvrB in an incision complex.

The protein localises to the cytoplasm. Functionally, the UvrABC repair system catalyzes the recognition and processing of DNA lesions. UvrC both incises the 5' and 3' sides of the lesion. The N-terminal half is responsible for the 3' incision and the C-terminal half is responsible for the 5' incision. The sequence is that of UvrABC system protein C from Hydrogenovibrio crunogenus (strain DSM 25203 / XCL-2) (Thiomicrospira crunogena).